Reading from the N-terminus, the 1132-residue chain is Eisosome protein SEG2 (1132 aa).

Polar residues predominate over residues 76-95 (KRTSSLPNQGHKNTSNNSAG). Disordered stretches follow at residues 76–142 (KRTS…GNSG) and 171–225 (RYSL…NDYH). The segment covering 101 to 113 (AHEDAETTFREFG) has biased composition (basic and acidic residues). A compositionally biased stretch (polar residues) spans 115-142 (KQSSKVLNISSSTGQNSKSRTTSLGNSG). Residue S137 is modified to Phosphoserine. The span at 208–225 (GSQEKKSESGGKSKNDYH) shows a compositional bias: basic and acidic residues. S280 bears the Phosphoserine mark. Positions 404 to 429 (PTLSEPKPAYVPPEDVEKEPSTLSNQ) are disordered. A phosphoserine mark is found at S504 and S507. Disordered regions lie at residues 510–938 (GGNQ…FRSM) and 961–993 (EKKEKGGHVSRKSWTFGLPSPLKRRTSHSTHTT). K526 participates in a covalent cross-link: Glycyl lysine isopeptide (Lys-Gly) (interchain with G-Cter in ubiquitin). Acidic residues-rich tracts occupy residues 550–561 (DQEEALSDNEPE) and 595–644 (KDDD…DDEY). S556 bears the Phosphoserine mark. Polar residues-rich tracts occupy residues 688 to 699 (SENAEVSQSGTN) and 710 to 735 (YLTNTSSDTFSLDSENVNSKSSTDTT). K743 is covalently cross-linked (Glycyl lysine isopeptide (Lys-Gly) (interchain with G-Cter in ubiquitin)). The segment covering 761-773 (SSTSSSIYSIETS) has biased composition (low complexity). Polar residues-rich tracts occupy residues 774 to 810 (PNIDSSTGKTASNTKTNSHGPPTSISKQKYDQSSSHQ) and 827 to 845 (NRSCLRTLRGSSNEATLSH). Over residues 850–860 (PASDSSSSPPY) the composition is skewed to low complexity. The span at 916–930 (PPARKSSFEKERPAK) shows a compositional bias: basic and acidic residues. S980 and S1022 each carry phosphoserine.

This sequence belongs to the SEG1 family. Component of eisosomes, large cytoplasmic protein assemblies that localize to specialized domains termed MCCs on the plasma membrane.

The protein localises to the cell membrane. Likely plays only a minor role in eisosome assembly. In Saccharomyces cerevisiae (strain ATCC 204508 / S288c) (Baker's yeast), this protein is Eisosome protein SEG2 (SEG2).